Consider the following 95-residue polypeptide: Large ribosomal subunit protein uL23 (95 aa).

This sequence belongs to the universal ribosomal protein uL23 family. As to quaternary structure, part of the 50S ribosomal subunit. Contacts protein L29, and trigger factor when it is bound to the ribosome.

One of the early assembly proteins it binds 23S rRNA. One of the proteins that surrounds the polypeptide exit tunnel on the outside of the ribosome. Forms the main docking site for trigger factor binding to the ribosome. This Desulfitobacterium hafniense (strain Y51) protein is Large ribosomal subunit protein uL23.